The primary structure comprises 187 residues: ATP synthase subunit b 2 (187 aa).

Residues 1 to 12 (MAQERAEHESAD) show a composition bias toward basic and acidic residues. Residues 1–31 (MAQERAEHESADQHTTSTGVPHEGQGEPFPP) form a disordered region. The chain crosses the membrane as a helical span at residues 40 to 60 (LLIWLAISFLLLYALMSKLVL).

It belongs to the ATPase B chain family. In terms of assembly, F-type ATPases have 2 components, F(1) - the catalytic core - and F(0) - the membrane proton channel. F(1) has five subunits: alpha(3), beta(3), gamma(1), delta(1), epsilon(1). F(0) has three main subunits: a(1), b(2) and c(10-14). The alpha and beta chains form an alternating ring which encloses part of the gamma chain. F(1) is attached to F(0) by a central stalk formed by the gamma and epsilon chains, while a peripheral stalk is formed by the delta and b chains.

Its subcellular location is the cell inner membrane. In terms of biological role, f(1)F(0) ATP synthase produces ATP from ADP in the presence of a proton or sodium gradient. F-type ATPases consist of two structural domains, F(1) containing the extramembraneous catalytic core and F(0) containing the membrane proton channel, linked together by a central stalk and a peripheral stalk. During catalysis, ATP synthesis in the catalytic domain of F(1) is coupled via a rotary mechanism of the central stalk subunits to proton translocation. Its function is as follows. Component of the F(0) channel, it forms part of the peripheral stalk, linking F(1) to F(0). The b'-subunit is a diverged and duplicated form of b found in plants and photosynthetic bacteria. The protein is ATP synthase subunit b 2 (atpF2) of Beijerinckia indica subsp. indica (strain ATCC 9039 / DSM 1715 / NCIMB 8712).